Here is a 343-residue protein sequence, read N- to C-terminus: tRNA-splicing endonuclease (343 aa).

Active-site residues include tyrosine 277, histidine 288, and lysine 319.

Belongs to the tRNA-intron endonuclease family. Archaeal long subfamily. Homodimer.

The catalysed reaction is pretRNA = a 3'-half-tRNA molecule with a 5'-OH end + a 5'-half-tRNA molecule with a 2',3'-cyclic phosphate end + an intron with a 2',3'-cyclic phosphate and a 5'-hydroxyl terminus.. Endonuclease that removes tRNA introns. Cleaves pre-tRNA at the 5' and 3' splice sites to release the intron. The products are an intron and two tRNA half-molecules bearing 2',3' cyclic phosphate and 5'-OH termini. Recognizes a pseudosymmetric substrate in which 2 bulged loops of 3 bases are separated by a stem of 4 bp. The protein is tRNA-splicing endonuclease of Halobacterium salinarum (strain ATCC 29341 / DSM 671 / R1).